We begin with the raw amino-acid sequence, 560 residues long: Putative transport protein VIBHAR_02636 (560 aa).

5 helical membrane-spanning segments follow: residues 8–28, 37–57, 66–86, 91–111, and 164–184; these read LLEQNPILLIFVVLAIGLAFG, LGNSIGVLITSLVMGHLGFSF, FMLFIYCVGIEAGPNFFGIFF, HYFILSMTVLVSAVGLTYFCS, and VGYAMAYLVGLISMIMFAKLL. 2 consecutive RCK C-terminal domains span residues 205–292 and 293–376; these read LGNS…FRNG and KEVF…KIGF. A run of 6 helical transmembrane segments spans residues 386–406, 409–429, 450–470, 478–498, 505–525, and 539–559; these read LLAFCSFFILGIMFGLVTMTF, VSFSLGNAVGLLLSGITLGFL, LGLMFFMVGIGLSAGGKIFEH, IIGLAFIVSVVPVVLAYLVGA, SALLFGAIIGARTCAPAMDVV, and AGTYAIANILMTLAGTILIIL.

This sequence belongs to the AAE transporter (TC 2.A.81) family. YbjL subfamily.

It localises to the cell membrane. The protein is Putative transport protein VIBHAR_02636 of Vibrio campbellii (strain ATCC BAA-1116).